The chain runs to 255 residues: Hemin import ATP-binding protein HmuV (255 aa).

Positions 2 to 238 (LQVEGLYLCR…AALKAVYGID (237 aa)) constitute an ABC transporter domain. 34 to 41 (GPNGAGKS) provides a ligand contact to ATP.

The protein belongs to the ABC transporter superfamily. Heme (hemin) importer (TC 3.A.1.14.5) family. The complex is composed of two ATP-binding proteins (HmuV), two transmembrane proteins (HmuU) and a solute-binding protein (HmuT).

The protein resides in the cell inner membrane. Functionally, part of the ABC transporter complex HmuTUV involved in hemin import. Responsible for energy coupling to the transport system. This is Hemin import ATP-binding protein HmuV from Pseudomonas putida (strain ATCC 47054 / DSM 6125 / CFBP 8728 / NCIMB 11950 / KT2440).